Here is a 450-residue protein sequence, read N- to C-terminus: Protein tweety homolog 1 (450 aa).

The Extracellular portion of the chain corresponds to 1-43 (MGAPPGYRPSAWVHLLHQLPRADFQLRPVPSAFAPQEREYQQA). Residues 44-64 (LLLVAALAGLGLGLSLIFIAV) form a helical membrane-spanning segment. The Cytoplasmic segment spans residues 65–88 (YLIRFCCCRPPEPPGAKSPPPGGG). A helical transmembrane segment spans residues 89–109 (CVTWNCIAALLVGCAGIGVGF). The Extracellular portion of the chain corresponds to 110–214 (YGNSETSDGV…DVSFVEEYRW (105 aa)). A glycan (N-linked (GlcNAc...) asparagine) is linked at Asn-130. The helical transmembrane segment at 215–235 (LAYVLLLLLELLVCLFTLLGL) threads the bilayer. At 236–240 (ARQSK) the chain is on the cytoplasmic side. Residues 241–261 (WLVIVMTVMSLLVLVLSWGSM) form a helical membrane-spanning segment. The Extracellular portion of the chain corresponds to 262–390 (GLEAATAVGL…LRGLCEDTLE (129 aa)). 2 disulfide bridges follow: Cys-275–Cys-385 and Cys-303–Cys-370. Asn-284 and Asn-355 each carry an N-linked (GlcNAc...) asparagine glycan. A helical membrane pass occupies residues 391-411 (GLLFLLLFSLLSAGALATVLC). The Cytoplasmic portion of the chain corresponds to 412–450 (SLPRAWALFPPSDDYEDTDDDDPFNPQESKRFVQWQSSI). A disordered region spans residues 427–450 (EDTDDDDPFNPQESKRFVQWQSSI). Ser-440 bears the Phosphoserine mark.

It belongs to the tweety family. In terms of assembly, homotetramer; disulfide-linked. Homodimer. Post-translationally, N-glycosylated. Contains high-mannose, hybrid and complex oligosaccharides.

It is found in the cell membrane. The enzyme catalyses chloride(in) = chloride(out). It catalyses the reaction L-glutamate(out) = L-glutamate(in). Calcium-independent, swelling-dependent volume-regulated anion channel (VRAC-swell) which plays a pivotal role in the process of regulatory volume decrease (RVD) in the brain through the efflux of anions like chloride and organic osmolytes like glutamate. The protein is Protein tweety homolog 1 (TTYH1) of Bos taurus (Bovine).